The primary structure comprises 599 residues: Dachshund homolog 2 (599 aa).

The tract at residues 69–155 (RMVDMHGMKV…LITRKDFETL (87 aa)) is DACHbox-N. Disordered stretches follow at residues 166–186 (RQMT…PKRS), 237–280 (LQGN…GPQH), and 370–409 (RIPE…MDHH). Over residues 237 to 262 (LQGNGSQNGTESEPDDLNSNTGGSES) the composition is skewed to polar residues. The segment covering 389-405 (SQTSSHTSSSVSSSPSQ) has biased composition (low complexity). The tract at residues 453–533 (SSVETLLTNI…KTKRKLQEAL (81 aa)) is DACHbox-C. Positions 459–554 (LTNIQGLLKV…QALKQATTSD (96 aa)) form a coiled coil.

Belongs to the DACH/dachshund family. Interacts with SIX6 and EYA2.

It is found in the nucleus. Transcription factor that is involved in regulation of organogenesis. Seems to be a regulator for SIX1 and SIX6. Seems to act as a corepressor of SIX6 in regulating proliferation by directly repressing cyclin-dependent kinase inhibitors, including the p27Kip1 promoter. Is recruited with SIX6 to the p27Kip1 promoter in embryonal retina. SIX6 corepression also seems to involve NCOR1, TBL1, HDAC1 and HDAC3. May be involved together with PAX3, SIX1, and EYA2 in regulation of myogenesis. In the developing somite, expression of DACH2 and PAX3 is regulated by the overlying ectoderm, and DACH2 and PAX3 positively regulate each other's expression. Probably binds to DNA via its DACHbox-N domain. In Homo sapiens (Human), this protein is Dachshund homolog 2 (DACH2).